Here is a 152-residue protein sequence, read N- to C-terminus: Maintenance of carboxysome distribution protein B (152 aa).

As to quaternary structure, self-associates, interacts with McdA probably via the C-terminus of both proteins. Homohexamerizes. Probably a trimer of dimers. Interacts with most of the shell components of the carboxysome (CcmK2, CcmK3, CcmK4, CcmL and CcmO, but not CcmP) via its C-terminus.

It localises to the carboxysome. In terms of biological role, mcdA and McdB together mediate carboxysome (Cb) spacing, size, ultrastructure and probably inheritance in the cell. Together they prevent Cb aggregation. McdA is an ATPase that forms dynamic gradients on the nucleoid in response to adapter protein McdB, which associates with carboxysomes. The interplay between McdA gradients on the nucleoid and McdB-bound carboxysomes result in the equal spacing of Cbs along the cell length. McdB may have an additional function in cell divison. Stimulates the ATPase activity of McdA, causing McdA to be released from DNA. Overexpression leads to loss of McdA oscillation and formation of large Cb aggregates which colocalize with McdB, as well as diffuse McdB staining in the cytoplasm. Undergoes liquid-liquid phase separation between pH 6.5-7.5 and at concentrations between 1 uM and 167 uM. Forms polar foci upon overexpression in E.coli. Its function is as follows. Incorrect positioning (aggregation) of carboxysomes results in reduced CO(2) fixation by encapsulated RuBisCO, which leads to slower growth, cell elongation, asymmetric cell division and an increase in RuBisCO levels. The polypeptide is Maintenance of carboxysome distribution protein B (Synechococcus elongatus (strain ATCC 33912 / PCC 7942 / FACHB-805) (Anacystis nidulans R2)).